A 184-amino-acid polypeptide reads, in one-letter code: Peptide deformylase (184 aa).

Fe cation-binding residues include cysteine 111 and histidine 154. Glutamate 155 is an active-site residue. Fe cation is bound at residue histidine 158.

The protein belongs to the polypeptide deformylase family. It depends on Fe(2+) as a cofactor.

The catalysed reaction is N-terminal N-formyl-L-methionyl-[peptide] + H2O = N-terminal L-methionyl-[peptide] + formate. Its function is as follows. Removes the formyl group from the N-terminal Met of newly synthesized proteins. Requires at least a dipeptide for an efficient rate of reaction. N-terminal L-methionine is a prerequisite for activity but the enzyme has broad specificity at other positions. The polypeptide is Peptide deformylase (Lacticaseibacillus casei (strain BL23) (Lactobacillus casei)).